The sequence spans 450 residues: MFIGFDYGTANCSVAVMRDGKPHLLKMENDSTLLPSMLCAPTREAVSEWLYRHHDVPADDDETQALLRRAIRYNREEDIDVTAKSVQFGLSSLAQYIDDPEEVWFVKSPKSFLGASGLKPQQVALFEDLVCAMMLHIRQQAQAQLPEAITQAVIGRPINFQGLGGDEANTQAQGILERAAKRAGFRDVVFQYEPVAAGLDYEATLQEEKRVLVVDIGGGTTDCSLLLMGPQWRSRLDREASLLGHSGCRIGGNDLDIALAFKNLMPLLGMGGETEKGIALPILPWWNAVAINDVPAQSDFYSSANGRLLNDLVRDAREPEKVALLQKVWRQRLSYRLVRSAEECKIALSSVAETRASLPFISNELATLISQRGLESALSQPLTRILEQVQLALDNAQEKPDVIYLTGGSARSPLIKKALAEQLPGIPIAGGDDFGSVTAGLARWAEVVFR.

It belongs to the heat shock protein 70 family.

This is an uncharacterized protein from Escherichia coli (strain K12).